The sequence spans 101 residues: Vacuolar ATPase assembly integral membrane protein VMA21 (101 aa).

Topologically, residues 1-25 (MERPDKAALNALQPPEFRNESSLAS) are cytoplasmic. A helical transmembrane segment spans residues 26–46 (TLKTLLFFTALMITVPIGLYF). The Lumenal segment spans residues 47 to 65 (TTKSYIFEGALGMSNRDSY). The chain crosses the membrane as a helical span at residues 66–86 (FYAAIVAVVAVHVVLALFVYV). Residues 87-101 (AWNEGSRQWREGKQD) are Cytoplasmic-facing.

It belongs to the VMA21 family. As to quaternary structure, associates with the V0 complex of the vacuolar ATPase (V-ATPase). Interacts with ATP6AP2.

It is found in the endoplasmic reticulum membrane. The protein resides in the endoplasmic reticulum-Golgi intermediate compartment membrane. It localises to the cytoplasmic vesicle. The protein localises to the COPII-coated vesicle membrane. Required for the assembly of the V0 complex of the vacuolar ATPase (V-ATPase) in the endoplasmic reticulum. The protein is Vacuolar ATPase assembly integral membrane protein VMA21 of Homo sapiens (Human).